Here is a 164-residue protein sequence, read N- to C-terminus: MQCLGKIFLSPGTKPESKNLIVIIFTADRDQRVLALSRIVKRPFFNKNPMPAMSQILDPIPNNQPSALFCCYVNATNQIQVARITNVPNWYFERVVFPGQRLVFEAVPSAQLEIHTGMMASSIISDTIPCEQLSIDPDGLAAGGFISPEKEHESEDMTSQSLVA.

Positions 144–164 (GFISPEKEHESEDMTSQSLVA) are disordered.

This is an uncharacterized protein from Synechocystis sp. (strain ATCC 27184 / PCC 6803 / Kazusa).